The primary structure comprises 410 residues: Lissencephaly-1 homolog B (410 aa).

In terms of domain architecture, LisH spans 7–39 (QRDELNRAIADYLRSNGYEEAYSTFKKEAELDM). Positions 56 to 82 (TSVIRLQKKVMELESKLNEAKEEITLG) form a coiled coil. WD repeat units lie at residues 106 to 147 (GHRS…RTLK), 148 to 187 (GHTD…CIRT), 190 to 229 (GHDH…CVKT), 232 to 271 (GHRE…CKAE), 274 to 333 (EHEH…CLMT), 336 to 375 (GHDN…CMKT), and 378 to 410 (AHEH…WECR).

This sequence belongs to the WD repeat LIS1/nudF family. In terms of assembly, can self-associate. Component of the cytosolic PAF-AH (I) heterotetrameric enzyme, which is composed of PAFAH1B1 (beta), PAFAH1B2 (alpha2) and PAFAH1B3 (alpha1) subunits. The catalytic activity of the enzyme resides in the alpha1 (PAFAH1B3) and alpha2 (PAFAH1B2) subunits, whereas the beta subunit (PAFAH1B1) has regulatory activity. Trimer formation is not essential for the catalytic activity. Interacts with dynein, dynactin, nde1 and ndel1.

The protein resides in the cytoplasm. It is found in the cytoskeleton. It localises to the microtubule organizing center. Its subcellular location is the centrosome. Functionally, regulatory subunit (beta subunit) of the cytosolic type I platelet-activating factor (PAF) acetylhydrolase (PAF-AH (I)), an enzyme that catalyzes the hydrolyze of the acetyl group at the sn-2 position of PAF and its analogs and participates in PAF inactivation. Regulates the PAF-AH (I) activity in a catalytic dimer composition-dependent manner. Positively regulates the activity of the minus-end directed microtubule motor protein dynein. May enhance dynein-mediated microtubule sliding by targeting dynein to the microtubule plus end. Required for several dynein- and microtubule-dependent processes such as the maintenance of Golgi integrity, the peripheral transport of microtubule fragments and the coupling of the nucleus and centrosome. May be required for proliferation of neuronal precursors and neuronal migration. The polypeptide is Lissencephaly-1 homolog B (pafah1b1-2) (Salmo salar (Atlantic salmon)).